An 87-amino-acid chain; its full sequence is Apoptosis inducing factor BLCAP B (87 aa).

Transmembrane regions (helical) follow at residues 19–39 (PALW…FLLE) and 43–63 (CTIC…SCWG).

It belongs to the BLCAP family.

It is found in the cytoplasm. Its subcellular location is the nucleus. The protein localises to the membrane. Its function is as follows. Acts as a tumor suppressor; induces growth arrest at G(1)/S checkpoint and apoptosis via RB1-dependent and p53/TP53- and NF-kappa-B-independent mechanisms. Modulates expression of genes involved in the regulation of proliferation, cell cycle and apoptosis. The sequence is that of Apoptosis inducing factor BLCAP B (blcap-b) from Xenopus laevis (African clawed frog).